The chain runs to 462 residues: GTPase HflX (462 aa).

The Hflx-type G domain maps to 255–452 (PAVGIVGYTN…LLEEKIYNLP (198 aa)). Residues 261–268 (GYTNAGKS), 286–290 (FATLD), 308–311 (DTVG), 374–377 (NKID), and 430–432 (SAY) contribute to the GTP site. The Mg(2+) site is built by S268 and T288.

Belongs to the TRAFAC class OBG-HflX-like GTPase superfamily. HflX GTPase family. In terms of assembly, monomer. Associates with the 50S ribosomal subunit. Requires Mg(2+) as cofactor.

The protein localises to the cytoplasm. Its function is as follows. GTPase that associates with the 50S ribosomal subunit and may have a role during protein synthesis or ribosome biogenesis. This chain is GTPase HflX, found in Leptospira borgpetersenii serovar Hardjo-bovis (strain JB197).